A 274-amino-acid polypeptide reads, in one-letter code: Putative deoxyribonuclease TATDN1 homolog (274 aa).

4 residues coordinate a divalent metal cation: E105, H139, H162, and D208.

Belongs to the metallo-dependent hydrolases superfamily. TatD-type hydrolase family. A divalent metal cation is required as a cofactor.

Its subcellular location is the nucleus. Putative deoxyribonuclease. This is Putative deoxyribonuclease TATDN1 homolog from Enterocytozoon bieneusi (strain H348) (Microsporidian parasite).